Consider the following 244-residue polypeptide: 5-oxoprolinase subunit A (244 aa).

It belongs to the LamB/PxpA family. As to quaternary structure, forms a complex composed of PxpA, PxpB and PxpC.

The catalysed reaction is 5-oxo-L-proline + ATP + 2 H2O = L-glutamate + ADP + phosphate + H(+). Functionally, catalyzes the cleavage of 5-oxoproline to form L-glutamate coupled to the hydrolysis of ATP to ADP and inorganic phosphate. This chain is 5-oxoprolinase subunit A, found in Shigella dysenteriae serotype 1 (strain Sd197).